A 162-amino-acid chain; its full sequence is NADH-quinone oxidoreductase subunit I (162 aa).

2 consecutive 4Fe-4S ferredoxin-type domains span residues 53–83 and 93–122; these read LRRYPNGEERCIACKLCEAVCPAMAITIESE and TRYDIDMIKCIFCGFCEEACPVDAIVETRV. [4Fe-4S] cluster contacts are provided by Cys-63, Cys-66, Cys-69, Cys-73, Cys-102, Cys-105, Cys-108, and Cys-112.

This sequence belongs to the complex I 23 kDa subunit family. In terms of assembly, NDH-1 is composed of 14 different subunits. Subunits NuoA, H, J, K, L, M, N constitute the membrane sector of the complex. Requires [4Fe-4S] cluster as cofactor.

It is found in the cell inner membrane. The enzyme catalyses a quinone + NADH + 5 H(+)(in) = a quinol + NAD(+) + 4 H(+)(out). NDH-1 shuttles electrons from NADH, via FMN and iron-sulfur (Fe-S) centers, to quinones in the respiratory chain. The immediate electron acceptor for the enzyme in this species is believed to be ubiquinone. Couples the redox reaction to proton translocation (for every two electrons transferred, four hydrogen ions are translocated across the cytoplasmic membrane), and thus conserves the redox energy in a proton gradient. In Nitrosomonas europaea (strain ATCC 19718 / CIP 103999 / KCTC 2705 / NBRC 14298), this protein is NADH-quinone oxidoreductase subunit I.